The primary structure comprises 130 residues: Nascent polypeptide-associated complex protein (130 aa).

An NAC-A/B domain is found at 8-75; it reads PKMMRQMQKM…AKNIKKDDIK (68 aa).

This sequence belongs to the NAC-alpha family. Homodimer. Interacts with the ribosome. Binds ribosomal RNA.

Functionally, contacts the emerging nascent chain on the ribosome. The sequence is that of Nascent polypeptide-associated complex protein from Methanococcus aeolicus (strain ATCC BAA-1280 / DSM 17508 / OCM 812 / Nankai-3).